The primary structure comprises 693 residues: Golgin subfamily A member 6C (693 aa).

Disordered stretches follow at residues N20–Y71, L497–Q547, and N629–T693. A coiled-coil region spans residues E73–L611. Over residues L537–Q547 the composition is skewed to basic and acidic residues. Residues P679–T693 show a composition bias toward polar residues.

It belongs to the GOLGA6 family.

This chain is Golgin subfamily A member 6C (GOLGA6C), found in Homo sapiens (Human).